Here is a 288-residue protein sequence, read N- to C-terminus: General transcription factor IIE subunit 2 (288 aa).

Residues 16–56 (ALTTPAVEKRPSASSESSKKKRAKLELSSTSGSKPSSDGSN) are disordered. The segment covering 41–56 (ELSSTSGSKPSSDGSN) has biased composition (low complexity). Residues 63–143 (SLSGSSGYKF…YAFKPKYNLK (81 aa)) constitute a DNA-binding region (TFIIE beta).

Belongs to the TFIIE beta subunit family. In terms of assembly, tetramer of two alpha and two beta chains.

It localises to the nucleus. In terms of biological role, recruits TFIIH to the initiation complex and stimulates the RNA polymerase II C-terminal domain kinase and DNA-dependent ATPase activities of TFIIH. Both TFIIH and TFIIE are required for promoter clearance by RNA polymerase. The protein is General transcription factor IIE subunit 2 (gtf2e2) of Xenopus laevis (African clawed frog).